The following is a 91-amino-acid chain: Protein sigN139 (91 aa).

N23 and N34 each carry an N-linked (GlcNAc...) asparagine glycan. A helical membrane pass occupies residues 46 to 68 (LLPVVAFISGTVTSITGLVAGAL).

Its subcellular location is the membrane. The chain is Protein sigN139 from Dictyostelium discoideum (Social amoeba).